The following is a 258-amino-acid chain: tRNA pseudouridine synthase A (258 aa).

Asp53 serves as the catalytic Nucleophile. Substrate is bound at residue Tyr111.

The protein belongs to the tRNA pseudouridine synthase TruA family. In terms of assembly, homodimer.

The catalysed reaction is uridine(38/39/40) in tRNA = pseudouridine(38/39/40) in tRNA. Functionally, formation of pseudouridine at positions 38, 39 and 40 in the anticodon stem and loop of transfer RNAs. This is tRNA pseudouridine synthase A from Streptococcus agalactiae serotype III (strain NEM316).